Consider the following 350-residue polypeptide: Uroporphyrinogen decarboxylase (350 aa).

Substrate-binding positions include arginine 23–arginine 27, aspartate 73, tyrosine 150, threonine 205, and histidine 322.

The protein belongs to the uroporphyrinogen decarboxylase family. In terms of assembly, homodimer.

It is found in the cytoplasm. It catalyses the reaction uroporphyrinogen III + 4 H(+) = coproporphyrinogen III + 4 CO2. The protein operates within porphyrin-containing compound metabolism; protoporphyrin-IX biosynthesis; coproporphyrinogen-III from 5-aminolevulinate: step 4/4. Its function is as follows. Catalyzes the decarboxylation of four acetate groups of uroporphyrinogen-III to yield coproporphyrinogen-III. In Methylococcus capsulatus (strain ATCC 33009 / NCIMB 11132 / Bath), this protein is Uroporphyrinogen decarboxylase.